The primary structure comprises 143 residues: MNKTITPSIETIERNWFLVDAKDKTLGRLSTEIAAVLRGKNKPTFTPHLDTGDFVIVVNAEKVEVTGKKASQKLYRRHSGRPGGMKVEKFESLQERIPERIIEQAVKGMLPHNSLGRQQFKKLKVYKGSDHPHAAQNPVLLNS.

It belongs to the universal ribosomal protein uL13 family. Part of the 50S ribosomal subunit.

Functionally, this protein is one of the early assembly proteins of the 50S ribosomal subunit, although it is not seen to bind rRNA by itself. It is important during the early stages of 50S assembly. In Prochlorococcus marinus subsp. pastoris (strain CCMP1986 / NIES-2087 / MED4), this protein is Large ribosomal subunit protein uL13.